The following is a 127-amino-acid chain: Cyclin-dependent kinase 2-associated protein 2 (127 aa).

A disordered region spans residues 1–49 (MSYKPIAPAPSSTPGSSTPGPGTPVPTAGSVPSPSGSVPGAAGPFRPLF). Residues 9-44 (APSSTPGSSTPGPGTPVPTAGSVPSPSGSVPGAAGP) are compositionally biased toward low complexity. The interval 65–107 (PPGAQGSQSTYTDLLSVIEEMGKEIRPTYAGSKSAMERLKRGI) is interaction with CDK2.

This sequence belongs to the CDK2AP family. As to quaternary structure, component of the nucleosome remodeling and deacetylase (NuRD) repressor complex, composed of core proteins MTA1, MTA2, MTA3, RBBP4, RBBP7, HDAC1, HDAC2, MBD2, MBD3, and peripherally associated proteins CDK2AP1, CDK2AP2, GATAD2A, GATAD2B, CHD3, CHD4 and CHD5. The exact stoichiometry of the NuRD complex is unknown, and some subunits such as MBD2 and MBD3, GATAD2A and GATAD2B, and CHD3, CHD4 and CHD5 define mutually exclusive NuRD complexes. Interacts with CDK2AP1. Interacts with CDK2. Interacts with MAPK1. In terms of processing, phosphorylated by MAPK1 and CDK2.

It localises to the cytoplasm. The protein resides in the nucleus. Acts as a component of the histone deacetylase NuRD complex which participates in the remodeling of chromatin. Inhibits cell cycle G1/S phase transition by repressing CDK2 expression and activation; represses CDK2 activation by inhibiting its interaction with cyclin E and A. Plays a role in regulating the self-renewal of embryonic stem cells (ESCs) and in maintaining cell survival during terminal differentiation of ESCs. Regulates microtubule organization of metaphase II oocytes. The chain is Cyclin-dependent kinase 2-associated protein 2 (CDK2AP2) from Bos taurus (Bovine).